The primary structure comprises 434 residues: Glutamyl-tRNA reductase (434 aa).

Residues 49 to 52 (TCNR), S109, 114 to 116 (EPQ), and Q120 each bind substrate. The Nucleophile role is filled by C50. Position 189-194 (189-194 (GAGEMC)) interacts with NADP(+).

Belongs to the glutamyl-tRNA reductase family. In terms of assembly, homodimer.

The enzyme catalyses (S)-4-amino-5-oxopentanoate + tRNA(Glu) + NADP(+) = L-glutamyl-tRNA(Glu) + NADPH + H(+). It functions in the pathway porphyrin-containing compound metabolism; protoporphyrin-IX biosynthesis; 5-aminolevulinate from L-glutamyl-tRNA(Glu): step 1/2. Its function is as follows. Catalyzes the NADPH-dependent reduction of glutamyl-tRNA(Glu) to glutamate 1-semialdehyde (GSA). This chain is Glutamyl-tRNA reductase, found in Geotalea daltonii (strain DSM 22248 / JCM 15807 / FRC-32) (Geobacter daltonii).